The chain runs to 457 residues: Siroheme synthase (457 aa).

Residues 1-204 (MDHLPIFCQL…ADEKAVNATT (204 aa)) form a precorrin-2 dehydrogenase /sirohydrochlorin ferrochelatase region. Residues 22 to 23 (DV) and 43 to 44 (LT) contribute to the NAD(+) site. Ser128 is modified (phosphoserine). Positions 216–457 (GEVVLVGAGP…RDKLNWFSNY (242 aa)) are uroporphyrinogen-III C-methyltransferase. Residue Pro225 participates in S-adenosyl-L-methionine binding. Asp248 (proton acceptor) is an active-site residue. Lys270 (proton donor) is an active-site residue. Residues 301-303 (GGD), Ile306, 331-332 (TA), Met382, and Gly411 contribute to the S-adenosyl-L-methionine site.

In the N-terminal section; belongs to the precorrin-2 dehydrogenase / sirohydrochlorin ferrochelatase family. It in the C-terminal section; belongs to the precorrin methyltransferase family.

It carries out the reaction uroporphyrinogen III + 2 S-adenosyl-L-methionine = precorrin-2 + 2 S-adenosyl-L-homocysteine + H(+). The enzyme catalyses precorrin-2 + NAD(+) = sirohydrochlorin + NADH + 2 H(+). It catalyses the reaction siroheme + 2 H(+) = sirohydrochlorin + Fe(2+). Its pathway is cofactor biosynthesis; adenosylcobalamin biosynthesis; precorrin-2 from uroporphyrinogen III: step 1/1. It participates in cofactor biosynthesis; adenosylcobalamin biosynthesis; sirohydrochlorin from precorrin-2: step 1/1. The protein operates within porphyrin-containing compound metabolism; siroheme biosynthesis; precorrin-2 from uroporphyrinogen III: step 1/1. It functions in the pathway porphyrin-containing compound metabolism; siroheme biosynthesis; siroheme from sirohydrochlorin: step 1/1. Its pathway is porphyrin-containing compound metabolism; siroheme biosynthesis; sirohydrochlorin from precorrin-2: step 1/1. In terms of biological role, multifunctional enzyme that catalyzes the SAM-dependent methylations of uroporphyrinogen III at position C-2 and C-7 to form precorrin-2 via precorrin-1. Then it catalyzes the NAD-dependent ring dehydrogenation of precorrin-2 to yield sirohydrochlorin. Finally, it catalyzes the ferrochelation of sirohydrochlorin to yield siroheme. The sequence is that of Siroheme synthase from Salmonella gallinarum (strain 287/91 / NCTC 13346).